A 267-amino-acid polypeptide reads, in one-letter code: Phosphatidylglycerol--prolipoprotein diacylglyceryl transferase (267 aa).

Transmembrane regions (helical) follow at residues 20–40 (LEIRWYAICILLGLILGVYLA), 57–77 (FILIAFPLSILGARIYYVAFS), 88–108 (IFAIWNGGIAIYGGLITGAIV), and 117–137 (FINTLDFLDIVAPSVMIAQAI). Residue arginine 139 coordinates a 1,2-diacyl-sn-glycero-3-phospho-(1'-sn-glycerol). 3 helical membrane passes run 175–195 (QPTFLFESLWNLLGFGLVCVL), 205–225 (GEITAFYLVWYGCGRLLIEGL), and 235–255 (IRVSQWLSGVLILVGIIMVVL).

It belongs to the Lgt family.

It localises to the cell membrane. The catalysed reaction is L-cysteinyl-[prolipoprotein] + a 1,2-diacyl-sn-glycero-3-phospho-(1'-sn-glycerol) = an S-1,2-diacyl-sn-glyceryl-L-cysteinyl-[prolipoprotein] + sn-glycerol 1-phosphate + H(+). Its pathway is protein modification; lipoprotein biosynthesis (diacylglyceryl transfer). Its function is as follows. Catalyzes the transfer of the diacylglyceryl group from phosphatidylglycerol to the sulfhydryl group of the N-terminal cysteine of a prolipoprotein, the first step in the formation of mature lipoproteins. This Streptococcus suis (strain 98HAH33) protein is Phosphatidylglycerol--prolipoprotein diacylglyceryl transferase.